Reading from the N-terminus, the 199-residue chain is Signal peptidase complex subunit 2 (199 aa).

Topologically, residues 1-49 (MGKKDEKSQQGEELVKVNKWDGSAVKHALDDAVKTCLLGDRPQLKEQFG) are cytoplasmic. Residues 50-72 (LVNTRLALCALAVSVAIMAHAWD) form a helical membrane-spanning segment. Residues 73–81 (FTHPFPESR) are Lumenal-facing. A helical membrane pass occupies residues 82–104 (PVLLFSVLAYFALLGILTLHSSF). Over 105 to 199 (REKGTFAVAL…KKNASSLSSN (95 aa)) the chain is Cytoplasmic.

It belongs to the SPCS2 family. Component of the signal peptidase complex (SPC) composed of a catalytic subunit twr/SEC11 and three accessory subunits Spase12/SPCS1, Spase25/SPCS2 and Spase22-23/SPCS3. The complex induces a local thinning of the ER membrane which is used to measure the length of the signal peptide (SP) h-region of protein substrates. This ensures the selectivity of the complex towards h-regions shorter than 18-20 amino acids.

Its subcellular location is the endoplasmic reticulum membrane. Functionally, component of the signal peptidase complex (SPC) which catalyzes the cleavage of N-terminal signal sequences from nascent proteins as they are translocated into the lumen of the endoplasmic reticulum. Enhances the enzymatic activity of SPC and facilitates the interactions between different components of the translocation site. This is Signal peptidase complex subunit 2 (Spase25) from Drosophila melanogaster (Fruit fly).